Consider the following 66-residue polypeptide: U1-theraphotoxin-Cg1a 2 (66 aa).

Residues 1–21 form the signal peptide; the sequence is MKTSALFVIFGLVLLFCNSFA. Residues 22–29 constitute a propeptide that is removed on maturation; the sequence is AELEMTGR. Disulfide bonds link C31–C46, C38–C51, and C45–C58. P63 carries the proline amide modification.

It belongs to the neurotoxin 10 (Hwtx-1) family. 46 (Jztx-7/10/12) subfamily. Expressed by the venom gland.

It localises to the secreted. Functionally, probable ion channel inhibitor. The polypeptide is U1-theraphotoxin-Cg1a 2 (Chilobrachys guangxiensis (Chinese earth tiger tarantula)).